Here is a 623-residue protein sequence, read N- to C-terminus: Chaperone protein DnaK (623 aa).

The residue at position 197 (T197) is a Phosphothreonine; by autocatalysis. A compositionally biased stretch (basic and acidic residues) spans 595 to 615 (AENMYKKDEPNTANDKKKKDD). The interval 595-623 (AENMYKKDEPNTANDKKKKDDDVIDAEVE) is disordered.

It belongs to the heat shock protein 70 family.

Functionally, acts as a chaperone. This chain is Chaperone protein DnaK, found in Campylobacter jejuni subsp. doylei (strain ATCC BAA-1458 / RM4099 / 269.97).